A 1716-amino-acid chain; its full sequence is DNA-directed RNA polymerase I subunit RPA1 (1716 aa).

The Zn(2+) site is built by cysteine 64, cysteine 67, cysteine 74, histidine 77, cysteine 104, and cysteine 107. Residues 110–201 (LTCPRAAIHL…VAHFWKTHMA (92 aa)) form a clamp region. Cysteine 205 and cysteine 208 together coordinate Zn(2+). Residues 327-433 (FTNGQTVNLQ…IRQILEKKEG (107 aa)) are clamp. A rudder region spans residues 410 to 423 (DSDMDKLMLEKYPG). Residues lysine 431, arginine 436, and arginine 443 each contribute to the DNA site. Residues 475–549 (YPQPVTPWNV…QGAKVVCRHV (75 aa)) are involved in RRN3 binding to Pol I complex. Arginine 559 contributes to the RNA binding site. Positions 595, 597, and 599 each coordinate Mg(2+). An RNA-binding site is contributed by aspartate 599. The segment at 812–890 (KPNADVMRQR…NEINKACMPF (79 aa)) is funnel. Residues 967 to 1008 (RPPEFFFHCMAGREGLVDTAVKTSRSGYLQRCIIKHLEGLVI) form a bridging helix region. Residues 1067-1162 (ADPQKVLRHF…SLSVWRPDIH (96 aa)) form a mediates the interaction with TOP2A region. The trigger loop stretch occupies residues 1214 to 1255 (PGEAVGLLAAQSIGEPSTQMTLNTFHFAGRGEMNVTLGIPRL). A DNA-binding site is contributed by arginine 1256. Residues 1368–1493 (ASAFRSVNTR…RHSRPQGAEA (126 aa)) are disordered. A compositionally biased stretch (basic and acidic residues) spans 1380-1397 (TQKDLDDTEDSGRNRREE). Composition is skewed to acidic residues over residues 1398-1419 (ERDE…DADA) and 1429-1451 (EEEV…VQEE). Over residues 1452-1464 (ENIKGEGAHQTHE) the composition is skewed to basic and acidic residues. Positions 1465–1477 (PDEEEGSGLEEES) are enriched in acidic residues.

The protein belongs to the RNA polymerase beta' chain family. As to quaternary structure, component of the RNA polymerase I (Pol I) complex consisting of 13 subunits: a ten-subunit catalytic core composed of POLR1A/RPA1, POLR1B/RPA2, POLR1C/RPAC1, POLR1D/RPAC2, POLR1H/RPA12, POLR2E/RPABC1, POLR2F/RPABC2, POLR2H/RPABC3, POLR2K/RPABC4 and POLR2L/RPABC5; a mobile stalk subunit POLR1F/RPA43 protruding from the core and additional subunits homologous to general transcription factors POLR1E/RPA49 and POLR1G/RPA34. Part of Pol I pre-initiation complex (PIC), in which Pol I core assembles with RRN3 and promoter-bound UTBF and SL1/TIF-IB complex. Interacts (via dock II domain) with TOP2A; this interaction may assist Pol I transcription initiation by releasing supercoils occurring during DNA unwinding. Interacts with CAVIN1; this interaction induces the dissociation of Pol I complex paused at rDNA terminator sequences. Interacts with MYO1C. Interacts with ERBB2. Interacts with DDX11. Interacts with RECQL5. It depends on Mg(2+) as a cofactor. Post-translationally, phosphorylated.

It is found in the nucleus. Its subcellular location is the nucleolus. The protein localises to the chromosome. The enzyme catalyses RNA(n) + a ribonucleoside 5'-triphosphate = RNA(n+1) + diphosphate. Its function is as follows. Catalytic core component of RNA polymerase I (Pol I), a DNA-dependent RNA polymerase which synthesizes ribosomal RNA precursors using the four ribonucleoside triphosphates as substrates. Transcribes 47S pre-rRNAs from multicopy rRNA gene clusters, giving rise to 5.8S, 18S and 28S ribosomal RNAs. Pol I-mediated transcription cycle proceeds through transcription initiation, transcription elongation and transcription termination stages. During transcription initiation, Pol I pre-initiation complex (PIC) is recruited by the selectivity factor 1 (SL1/TIF-IB) complex bound to the core promoter that precedes an rDNA repeat unit. The PIC assembly bends the promoter favoring the formation of the transcription bubble and promoter escape. Once the polymerase has escaped from the promoter it enters the elongation phase during which RNA is actively polymerized, based on complementarity with the template DNA strand. Highly processive, assembles in structures referred to as 'Miller trees' where many elongating Pol I complexes queue and transcribe the same rDNA coding regions. At terminator sequences downstream of the rDNA gene, PTRF interacts with Pol I and halts Pol I transcription leading to the release of the RNA transcript and polymerase from the DNA. Forms Pol I active center together with the second largest subunit POLR1B/RPA2. Appends one nucleotide at a time to the 3' end of the nascent RNA, with POLR1A/RPA1 contributing a Mg(2+)-coordinating DxDGD motif, and POLR1B/RPA2 participating in the coordination of a second Mg(2+) ion and providing lysine residues believed to facilitate Watson-Crick base pairing between the incoming nucleotide and the template base. Typically, Mg(2+) ions direct a 5' nucleoside triphosphate to form a phosphodiester bond with the 3' hydroxyl of the preceding nucleotide of the nascent RNA, with the elimination of pyrophosphate. Has proofreading activity: Pauses and backtracks to allow the cleavage of a missincorporated nucleotide via POLR1H/RPA12. High Pol I processivity is associated with decreased transcription fidelity. This chain is DNA-directed RNA polymerase I subunit RPA1, found in Rattus norvegicus (Rat).